The chain runs to 784 residues: LPS-assembly protein LptD (784 aa).

The signal sequence occupies residues 1 to 24; the sequence is MKKRIPTLLATMIATALYSQQGLA. 2 cysteine pairs are disulfide-bonded: cysteine 31-cysteine 724 and cysteine 173-cysteine 725.

It belongs to the LptD family. In terms of assembly, component of the lipopolysaccharide transport and assembly complex. Interacts with LptE and LptA. Post-translationally, contains two intramolecular disulfide bonds.

It localises to the cell outer membrane. In terms of biological role, together with LptE, is involved in the assembly of lipopolysaccharide (LPS) at the surface of the outer membrane. This Escherichia coli O6:K15:H31 (strain 536 / UPEC) protein is LPS-assembly protein LptD.